The primary structure comprises 379 residues: Chaperone protein DnaJ (379 aa).

The region spanning aspartate 5–glycine 71 is the J domain. The segment at glycine 149 to arginine 231 adopts a CR-type zinc-finger fold. The Zn(2+) site is built by cysteine 162, cysteine 165, cysteine 179, cysteine 182, cysteine 205, cysteine 208, cysteine 219, and cysteine 222. CXXCXGXG motif repeat units follow at residues cysteine 162 to glycine 169, cysteine 179 to glycine 186, cysteine 205 to glycine 212, and cysteine 219 to glycine 226.

Belongs to the DnaJ family. In terms of assembly, homodimer. Requires Zn(2+) as cofactor.

It localises to the cytoplasm. Its function is as follows. Participates actively in the response to hyperosmotic and heat shock by preventing the aggregation of stress-denatured proteins and by disaggregating proteins, also in an autonomous, DnaK-independent fashion. Unfolded proteins bind initially to DnaJ; upon interaction with the DnaJ-bound protein, DnaK hydrolyzes its bound ATP, resulting in the formation of a stable complex. GrpE releases ADP from DnaK; ATP binding to DnaK triggers the release of the substrate protein, thus completing the reaction cycle. Several rounds of ATP-dependent interactions between DnaJ, DnaK and GrpE are required for fully efficient folding. Also involved, together with DnaK and GrpE, in the DNA replication of plasmids through activation of initiation proteins. The polypeptide is Chaperone protein DnaJ (Thermosipho africanus (strain TCF52B)).